The chain runs to 574 residues: Septation ring formation regulator EzrA (574 aa).

The Extracellular segment spans residues 1–7 (MSSGLIL). Residues 8–26 (LIVAIVLLVIIAYLVGVII) form a helical membrane-spanning segment. The Cytoplasmic segment spans residues 27–574 (RKRNDTLITS…YEKTRERIRF (548 aa)). 4 coiled-coil regions span residues 102-131 (NFIR…REAL), 161-190 (ENED…FVAL), 276-379 (VTLD…QQEK), and 459-493 (QLEA…NLEE).

The protein belongs to the EzrA family.

Its subcellular location is the cell membrane. Negative regulator of FtsZ ring formation; modulates the frequency and position of FtsZ ring formation. Inhibits FtsZ ring formation at polar sites. Interacts either with FtsZ or with one of its binding partners to promote depolymerization. The polypeptide is Septation ring formation regulator EzrA (Streptococcus equi subsp. zooepidemicus (strain MGCS10565)).